The sequence spans 118 residues: DNA-binding protein M164_1799 (118 aa).

This sequence belongs to the PDCD5 family.

The polypeptide is DNA-binding protein M164_1799 (Saccharolobus islandicus (strain M.16.4 / Kamchatka #3) (Sulfolobus islandicus)).